Here is a 193-residue protein sequence, read N- to C-terminus: Small ribosomal subunit protein eS1 (193 aa).

This sequence belongs to the eukaryotic ribosomal protein eS1 family.

This is Small ribosomal subunit protein eS1 from Methanobrevibacter smithii (strain ATCC 35061 / DSM 861 / OCM 144 / PS).